The primary structure comprises 535 residues: Probable serine/threonine protein phosphatase 2A regulatory subunit B''delta (535 aa).

The disordered stretch occupies residues 67–104 (SGTNSGSNSPLASMFPARNGPPLSPRNSTGSPRIARQR). 2 EF-hand domains span residues 174-209 (VPSF…GNML) and 387-422 (SSEP…QLHR). Ca(2+)-binding residues include Asp400, Asp402, Asn404, and Glu411.

In terms of assembly, PP2A consists of a common heterodimeric core enzyme, composed of a 36 kDa catalytic subunit (subunit C) and a 65 kDa constant regulatory subunit (PR65 or subunit A), that associates with a variety of regulatory subunits. Proteins that associate with the core dimer include three families of regulatory subunits B (the R2/B/PR55/B55, R3/B''/PR72/PR130/PR59 and R5/B'/B56 families) and cell signaling molecules.

Functionally, probable regulatory subunit of type 2A protein phosphatase. The polypeptide is Probable serine/threonine protein phosphatase 2A regulatory subunit B''delta (B''DELTA) (Arabidopsis thaliana (Mouse-ear cress)).